The following is a 346-amino-acid chain: NADH-ubiquinone oxidoreductase chain 2 (346 aa).

10 helical membrane passes run 25–45, 56–76, 94–114, 122–142, 148–168, 178–198, 200–220, 240–260, 278–298, and 325–345; these read NLLL…PLLA, ATKY…VIIL, LLNM…FHYW, IPLH…LSIL, LLNP…GAWG, IMAY…PYNP, LTLL…ITLM, ILTM…LTGF, LSTL…RLIY, and FILP…SQLI.

It belongs to the complex I subunit 2 family. Core subunit of respiratory chain NADH dehydrogenase (Complex I) which is composed of 45 different subunits. Interacts with TMEM242.

The protein localises to the mitochondrion inner membrane. It catalyses the reaction a ubiquinone + NADH + 5 H(+)(in) = a ubiquinol + NAD(+) + 4 H(+)(out). Its function is as follows. Core subunit of the mitochondrial membrane respiratory chain NADH dehydrogenase (Complex I) which catalyzes electron transfer from NADH through the respiratory chain, using ubiquinone as an electron acceptor. Essential for the catalytic activity and assembly of complex I. This Rattus norvegicus (Rat) protein is NADH-ubiquinone oxidoreductase chain 2.